Here is a 223-residue protein sequence, read N- to C-terminus: Large ribosomal subunit protein uL4 (223 aa).

The tract at residues 47–72 (GTASTKTRGEVAGGGRKPWPQKHTGR) is disordered.

It belongs to the universal ribosomal protein uL4 family. As to quaternary structure, part of the 50S ribosomal subunit.

In terms of biological role, one of the primary rRNA binding proteins, this protein initially binds near the 5'-end of the 23S rRNA. It is important during the early stages of 50S assembly. It makes multiple contacts with different domains of the 23S rRNA in the assembled 50S subunit and ribosome. Functionally, forms part of the polypeptide exit tunnel. The polypeptide is Large ribosomal subunit protein uL4 (Fervidobacterium nodosum (strain ATCC 35602 / DSM 5306 / Rt17-B1)).